A 385-amino-acid polypeptide reads, in one-letter code: Mannitol-1-phosphate 5-dehydrogenase (385 aa).

Alanine 4–glycine 15 provides a ligand contact to NAD(+).

The protein belongs to the mannitol dehydrogenase family.

It carries out the reaction D-mannitol 1-phosphate + NAD(+) = beta-D-fructose 6-phosphate + NADH + H(+). The protein is Mannitol-1-phosphate 5-dehydrogenase of Lactococcus lactis subsp. lactis (strain IL1403) (Streptococcus lactis).